The following is a 141-amino-acid chain: Protein C19orf12 homolog (141 aa).

A helical transmembrane segment spans residues 37–57 (AVAFVGGLVGGPPGLAVGGAV).

This sequence belongs to the C19orf12 family.

Its subcellular location is the mitochondrion. The protein resides in the mitochondrion membrane. It localises to the endoplasmic reticulum. It is found in the cytoplasm. The protein localises to the cytosol. The chain is Protein C19orf12 homolog from Bos taurus (Bovine).